The primary structure comprises 595 residues: MFS-type efflux pump MFS2 (595 aa).

The N-linked (GlcNAc...) asparagine glycan is linked to Asn62. The next 12 helical transmembrane spans lie at 69-89, 106-126, 136-156, 166-186, 197-217, 225-245, 301-321, 336-356, 381-401, 409-429, 442-462, and 478-498; these read WSITFVVAIATLAVALISSAY, VITLGVSLFVLGFAIGPLIWA, LLFFGTYLALTAFNAGAAGSP, FFAGSFGSSPLTNAGGVIADM, GIFAIAPFLGPVLGPVIGGFL, WVEGFLAIFSGVVWIIGSIFL, PIVLLLSTYMAIVYGTLYMLF, PGIGGLAFLGVLGGILAAMVI, LPVAIIGGIAIPIGLFWFAWT, IVSIIASAPFGFGMVLVFLSL, ASVLAANSVLRSLFGAAFPLF, and IPAFLALACVPFPFLFYIYGA.

Belongs to the major facilitator superfamily. DHA1 family. Polyamines/proton antiporter (TC 2.A.1.2.16) subfamily.

It localises to the cell membrane. In terms of biological role, MFS-type efflux pump involved in the modulation susceptibility to fluconazole and voriconazole, 2 azoles with similar molecular structure. This is MFS-type efflux pump MFS2 from Trichophyton rubrum (strain ATCC MYA-4607 / CBS 118892) (Athlete's foot fungus).